The primary structure comprises 244 residues: ATP synthase subunit a, chloroplastic (244 aa).

5 helical membrane passes run 35 to 55 (QVLI…AIAV), 92 to 112 (VPFI…GALL), 131 to 151 (INTT…AGIT), 196 to 216 (LVVV…VMFL), and 217 to 237 (GLFT…AYIG).

This sequence belongs to the ATPase A chain family. In terms of assembly, F-type ATPases have 2 components, CF(1) - the catalytic core - and CF(0) - the membrane proton channel. CF(1) has five subunits: alpha(3), beta(3), gamma(1), delta(1), epsilon(1). CF(0) has four main subunits: a, b, b' and c.

It localises to the plastid. Its subcellular location is the chloroplast thylakoid membrane. Its function is as follows. Key component of the proton channel; it plays a direct role in the translocation of protons across the membrane. In Coffea arabica (Arabian coffee), this protein is ATP synthase subunit a, chloroplastic.